We begin with the raw amino-acid sequence, 336 residues long: DNA-directed RNA polymerase subunit alpha (336 aa).

The interval 1–232 is alpha N-terminal domain (alpha-NTD); that stretch reads MIQKNWQELI…DQLGLFVNFE (232 aa). An alpha C-terminal domain (alpha-CTD) region spans residues 248–336; sequence FNPALLKKVD…ELAKRYEDQY (89 aa).

The protein belongs to the RNA polymerase alpha chain family. As to quaternary structure, homodimer. The RNAP catalytic core consists of 2 alpha, 1 beta, 1 beta' and 1 omega subunit. When a sigma factor is associated with the core the holoenzyme is formed, which can initiate transcription.

It carries out the reaction RNA(n) + a ribonucleoside 5'-triphosphate = RNA(n+1) + diphosphate. In terms of biological role, DNA-dependent RNA polymerase catalyzes the transcription of DNA into RNA using the four ribonucleoside triphosphates as substrates. The sequence is that of DNA-directed RNA polymerase subunit alpha from Chelativorans sp. (strain BNC1).